Reading from the N-terminus, the 60-residue chain is Large ribosomal subunit protein uL30 (60 aa).

Belongs to the universal ribosomal protein uL30 family. Part of the 50S ribosomal subunit.

The chain is Large ribosomal subunit protein uL30 from Leuconostoc citreum (strain KM20).